We begin with the raw amino-acid sequence, 1013 residues long: NHS-like protein 3 (1013 aa).

Lysine 17 carries the post-translational modification Phosphoserine. The interval serine 20–isoleucine 195 is disordered. Basic and acidic residues predominate over residues glutamine 73 to aspartate 89. Composition is skewed to polar residues over residues threonine 90–glycine 99 and serine 106–alanine 120. Position 92 is a phosphoserine (serine 92). At tyrosine 108 the chain carries Phosphotyrosine. Serine 136, serine 143, and serine 159 each carry phosphoserine. The residue at position 160 (threonine 160) is a Phosphothreonine. A compositionally biased stretch (basic and acidic residues) spans valine 168–arginine 178. Serine 213 carries the post-translational modification Phosphoserine. Arginine 318 carries the asymmetric dimethylarginine modification. A phosphoserine mark is found at serine 320, serine 325, serine 328, serine 336, serine 337, serine 339, and serine 340. The interval arginine 330–valine 1013 is disordered. Positions serine 336 to serine 361 are enriched in low complexity. Residues glutamate 362–glycine 375 are compositionally biased toward polar residues. A phosphoserine mark is found at serine 398, serine 402, and serine 407. Residues threonine 408–serine 427 are compositionally biased toward polar residues. 2 stretches are compositionally biased toward low complexity: residues valine 484 to serine 493 and arginine 515 to proline 530. Threonine 529 carries the phosphothreonine modification. Serine 543 carries the phosphoserine modification. Over residues serine 564 to serine 577 the composition is skewed to low complexity. Phosphothreonine is present on threonine 591. Residues proline 600–serine 614 show a composition bias toward pro residues. Serine 610 is modified (phosphoserine). Positions lysine 615 to proline 633 are enriched in low complexity. Polar residues predominate over residues glutamine 635 to glutamine 657. Serine 667 and serine 671 each carry phosphoserine. Pro residues-rich tracts occupy residues proline 668–threonine 683 and proline 706–proline 716. The segment covering proline 779 to serine 795 has biased composition (basic and acidic residues). Positions glycine 814–proline 829 are enriched in polar residues. A phosphoserine mark is found at serine 838, serine 842, and serine 848. Over residues alanine 859–proline 873 the composition is skewed to low complexity. Serine 909, serine 952, and serine 959 each carry phosphoserine. Residues lysine 942–serine 961 show a composition bias toward pro residues. Over residues arginine 964–glycine 975 the composition is skewed to polar residues.

Able to directly activate the TNF-NFkappaB signaling pathway. The sequence is that of NHS-like protein 3 (Nhsl3) from Mus musculus (Mouse).